The chain runs to 161 residues: Protein YzcX (161 aa).

This is Protein YzcX (yzcX) from Escherichia coli (strain K12).